The sequence spans 724 residues: 4-alpha-glucanotransferase (724 aa).

The protein belongs to the disproportionating enzyme family.

The protein localises to the cytoplasm. It carries out the reaction Transfers a segment of a (1-&gt;4)-alpha-D-glucan to a new position in an acceptor, which may be glucose or a (1-&gt;4)-alpha-D-glucan.. The sequence is that of 4-alpha-glucanotransferase (malQ) from Mycobacterium bovis (strain ATCC BAA-935 / AF2122/97).